A 128-amino-acid polypeptide reads, in one-letter code: Small ribosomal subunit protein uS12 (128 aa).

Position 89 is a 3-methylthioaspartic acid (aspartate 89). A disordered region spans residues 101 to 128 (SLDTSGVADRRNGRSKYGAKRPKEGAKK).

It belongs to the universal ribosomal protein uS12 family. As to quaternary structure, part of the 30S ribosomal subunit. Contacts proteins S8 and S17. May interact with IF1 in the 30S initiation complex.

Its function is as follows. With S4 and S5 plays an important role in translational accuracy. In terms of biological role, interacts with and stabilizes bases of the 16S rRNA that are involved in tRNA selection in the A site and with the mRNA backbone. Located at the interface of the 30S and 50S subunits, it traverses the body of the 30S subunit contacting proteins on the other side and probably holding the rRNA structure together. The combined cluster of proteins S8, S12 and S17 appears to hold together the shoulder and platform of the 30S subunit. The protein is Small ribosomal subunit protein uS12 of Chloroherpeton thalassium (strain ATCC 35110 / GB-78).